Consider the following 952-residue polypeptide: Bifunctional ent-kaurene synthase (952 aa).

The DXDD B-type cyclization motif motif lies at 328–331; that stretch reads DVDD. Residues Asp668, Glu672, Asn848, Asp849, Ser852, and Asp856 each coordinate Mg(2+). The DEXXE A-type cyclization motif signature appears at 668-672; that stretch reads DEYME.

This sequence belongs to the terpene synthase family. The cofactor is Mg(2+).

The catalysed reaction is ent-copalyl diphosphate = ent-kaur-16-ene + diphosphate. It catalyses the reaction (2E,6E,10E)-geranylgeranyl diphosphate = ent-copalyl diphosphate. Its pathway is plant hormone biosynthesis; gibberellin biosynthesis. Its function is as follows. Bifunctional ent-kaurene synthase; part of the gene cluster that mediates the biosynthesis of gibberellins (GAs), diterpenoids that may provide a selective advantage during infection of the preferred host plant, rice. Gibberellins (GAs) are diterpenoids and are synthesized via the mevalonate pathway. Biosynthesis of the major metabolite GA3 (gibberellic acid) from geranylgeranyl diphosphate (GGPP) requires 13 steps. The GGPP produced by the geranylgeranyl diphosphate synthase GGS2 is converted to ent-kaurene via ent-copalyldiphosphate in a two-step cyclization reaction performed by the bifunctional ent-copalyl diphosphate synthase/ent-kaurene synthase enzyme (CPS/KS). Ent-Kaurene is metabolized to GAs by a series of oxidation reactions catalyzed by cytochrome P450 monooxygenases. Cytochrome P450 monooxygenase P450-4 is an ent-kaurene oxidase that catalyzes the three oxidation steps between ent-kaurene and ent-kaurenoic acid. The highly multifunctional cytochrome P450 monooxygenase P450-1 then catalyzes four steps involving oxidation at two carbon atoms, in the main pathway from ent-kaurenoic acid to GA14 via GA12-aldehyde as well as producing kaurenolides and fujenoic acids as by-products. The cytochrome P450 monooxygenase P450-2 then converts GA14 to GA4 by removal of C-20. GA4 is further converted to GA7 by the GA4 desaturase DES via 1,2-desaturation before cytochrome P450 monooxygenase P450-3, a 13-hydroxylase, hydroxylates GA7 to GA3, the final product of the GA-biosynthetic pathway. The chain is Bifunctional ent-kaurene synthase from Gibberella fujikuroi (strain CBS 195.34 / IMI 58289 / NRRL A-6831) (Bakanae and foot rot disease fungus).